The sequence spans 425 residues: L-lysine N6-monooxygenase (425 aa).

8–14 (IGVGTGP) is an FAD binding site.

It belongs to the lysine N(6)-hydroxylase/L-ornithine N(5)-oxygenase family. It depends on FAD as a cofactor.

The protein localises to the cytoplasm. It localises to the cell membrane. It catalyses the reaction L-lysine + NADPH + O2 = N(6)-hydroxy-L-lysine + NADP(+) + H2O. The protein operates within siderophore biosynthesis; aerobactin biosynthesis. Its function is as follows. Flavoprotein monooxygenase required for N-hydroxylation of lysine. Involved in the biosynthesis of the siderophore aerobactin which is a chelator that mediates the high-affinity iron transport systems induced by the organism under iron-stressed conditions. The protein is L-lysine N6-monooxygenase of Escherichia coli.